The sequence spans 52 residues: Large ribosomal subunit protein eL39 (52 aa).

The protein belongs to the eukaryotic ribosomal protein eL39 family.

This Desulfurococcus amylolyticus (strain DSM 18924 / JCM 16383 / VKM B-2413 / 1221n) (Desulfurococcus kamchatkensis) protein is Large ribosomal subunit protein eL39.